A 1238-amino-acid polypeptide reads, in one-letter code: MVRPVQVGNKTRMSFAKIDEVLQMPDLIEVQKKSYKWFLEEGLREVFREISPIESFTGNLALEFVDYRLENNPKYSVEECKDRDTTYAVPMKVKVRLTNRETGEIKESEVFMGDFPLMTEKGTFIINGAERVIVSQLVRSPGVYYEQQFDKFGKKLISATVIPNRGAWLEYEEDSNDIVYVRIDRTRKVPITVLLRALGYSTDIQILDLLGEEEKLKATLDKDTTKSEEEALIEIYKRLRPGEPPTVESAKSLLYALFFDAKRYDLAKVGRYKFNKKLALKARIANLKSAKKIVNPVTGEILVEEGEKISKEKAEEIQNCGINVVEVLVEGKVVKVIGNNTVDINKYPMPYDVSSLNIKEAVNLSILKEILDNFSDEEAVINEIKNRMDELVPKHITKDDIIATISYQLNLTHGIGSIDDIDHLGNRRLRSVGELLQNQFRIGLARLERVVKERMTIQDVNEITPQNLINIRPVVAAIREFFGSSQLSQFMDQTNPLAELTHKRRVSALGPGGLSRERAGFEVRDVHYSHYGRICPIETPEGPNIGLIGSLTTYARVNEYGFIEAPYRRVDKTTGTVTDEIVYMTADEEDEYIIAQANEPLDENNRFINEKVVCRLKEEIIAVPPTEVDFMDVSPKQIVSVATSMIPFLENDDANRALMGSNMQRQAVPLIKPEAPIIGTGIEYKAAVDSGVVVLAKNDGVVEKVAADKVVIRTKDGRRDEYNLLKFKRSNQGTCINQRPIVNEGDEVKKGQVICDGPSTDHGELALGKNVLVGFMLWEGYNYEDAILISEELVRDDSLTSIHIEEYDAEARDTKLGPEEITREIPNVGEDALKDLDERGIIRIGAEVTAGDILVGKVTPKGETELTAEERLLRAIFGEKAREVRDTSLRVPHGESGIVVDVKVYSRENGDELPPGVNQMVRVFVAQKRKISVGDKMAGRHGNKGVISRILPVEDMPFLPDGTPLQICLNPLGVPSRMNIGQVLEVHLGLVAKALGWQIATPVFDGATEEDIQELLAKSGFSPDGKVQLYDGRTGEPFDNKVTVGYMYMLKLHHLVDDKMHARSTGPYSLVTQQPLGGKAQFGGQRFGEMEVWALEAYGAAHTLQEILTVKSDDVSGRVKTYEAIVKGENIPEPGIPESFKVLVKELQSLALDVKVITEDNQEIPLKEFEDDDDSDVPDATLNINIEGREDTPPEEVYEEGYEEGFEEESEELPEDIDFEPDSFDIENDDLDLEDFDI.

Positions 1186–1238 (IEGREDTPPEEVYEEGYEEGFEEESEELPEDIDFEPDSFDIENDDLDLEDFDI) are disordered. Positions 1193–1238 (PPEEVYEEGYEEGFEEESEELPEDIDFEPDSFDIENDDLDLEDFDI) are enriched in acidic residues.

The protein belongs to the RNA polymerase beta chain family. In terms of assembly, the RNAP catalytic core consists of 2 alpha, 1 beta, 1 beta' and 1 omega subunit. When a sigma factor is associated with the core the holoenzyme is formed, which can initiate transcription.

The enzyme catalyses RNA(n) + a ribonucleoside 5'-triphosphate = RNA(n+1) + diphosphate. DNA-dependent RNA polymerase catalyzes the transcription of DNA into RNA using the four ribonucleoside triphosphates as substrates. The sequence is that of DNA-directed RNA polymerase subunit beta from Thermoanaerobacter sp. (strain X514).